The following is a 424-amino-acid chain: Chloroquine resistance transporter (424 aa).

The Cytoplasmic portion of the chain corresponds to 1–49; it reads MKFASKKNNQKNSSKNDERYRELDNLVQEGNGSRLGGGSCLGKCAHVFK. The stretch at 50–58 is an intramembrane region; the sequence is LIFKEIKDN. Residues 59 to 83 traverse the membrane as a helical segment; that stretch reads IFIYILSIIYLSVSVMNTIFAKRTL. At 84–89 the chain is on the vacuolar side; sequence NKIGNY. A helical transmembrane segment spans residues 90–111; that stretch reads SFVTSETHNFICMIMFFIVYSL. The Cytoplasmic segment spans residues 112 to 126; sequence FGNKKGNSKERHRSF. The chain crosses the membrane as a helical span at residues 127–147; sequence NLQFFAISMLDACSVILAFIG. The Vacuolar portion of the chain corresponds to 148 to 152; the sequence is LTRTT. The chain crosses the membrane as a helical span at residues 153–173; sequence GNIQSFVLQLSIPINMFFCFL. The Cytoplasmic portion of the chain corresponds to 174–180; sequence ILRYRYH. Residues 181–202 form a helical membrane-spanning segment; the sequence is LYNYLGAVIIVVTIALVEMKLS. Over 203–210 the chain is Vacuolar; it reads FETQEENS. A helical membrane pass occupies residues 211–236; the sequence is IIFNLVLISSLIPVCFSNMTREIVFK. The Cytoplasmic portion of the chain corresponds to 237 to 241; it reads KYKID. A helical membrane pass occupies residues 242 to 263; that stretch reads ILRLNAMVSFFQLFTSCLILPV. The Vacuolar portion of the chain corresponds to 264-279; that stretch reads YTLPFLKQLHLPYNEI. Residues 280-292 lie within the membrane without spanning it; it reads WTNIKNGFACLFL. Disulfide bonds link cysteine 289–cysteine 312 and cysteine 301–cysteine 309. The Vacuolar segment spans residues 293-314; sequence GRNTVVENCGLGMAKLCDDCDG. Residues 315–339 form a helical membrane-spanning segment; it reads AWKTFALFSFFDICDNLITSYIIDK. Residues 340–343 are Cytoplasmic-facing; that stretch reads FSTM. The chain crosses the membrane as a helical span at residues 344-361; it reads TYTIVSCIQGPALAIAYY. The Vacuolar segment spans residues 362–374; it reads FKFLAGDVVREPR. The helical transmembrane segment at 375-397 threads the bilayer; sequence LLDFVTLFGYLFGSIIYRVGNII. Residues 398–424 are Cytoplasmic-facing; the sequence is LERKKMRNEENEDSEGELTNVDSIITQ.

Belongs to the CRT-like transporter family. As to quaternary structure, monomer.

It localises to the membrane. The protein resides in the vacuole membrane. It catalyses the reaction L-arginine(in) = L-arginine(out). It carries out the reaction L-lysine(in) = L-lysine(out). The catalysed reaction is L-histidine(out) = L-histidine(in). The enzyme catalyses Fe(3+)(in) = Fe(3+)(out). It catalyses the reaction Fe(2+)(in) = Fe(2+)(out). Its function is as follows. Nutrient transporter. Substrate transport is pH-dependent. Can transport arginine, lysine, histidine and peptides. Involved in maintaining the osmotic homeostasis of the digestive vacuole. Required for the normal asexual intraerythrocytic proliferation of parasites. Can transport Fe(2+) and Fe(3+). The sequence is that of Chloroquine resistance transporter from Plasmodium falciparum (isolate 7G8).